A 260-amino-acid chain; its full sequence is Coiled-coil domain-containing protein 127 (260 aa).

The stretch at 76–139 (AVISEHRRAV…EKSRLQPLRN (64 aa)) forms a coiled coil.

This is Coiled-coil domain-containing protein 127 (Ccdc127) from Mus musculus (Mouse).